The primary structure comprises 676 residues: Period circadian protein (676 aa).

The span at 1–34 (KVSDSAYSNSCSNSQSQRSGSSKSRLSGSHSSGS) shows a compositional bias: low complexity. The interval 1–161 (KVSDSAYSNS…AAQSFPIPSP (161 aa)) is disordered. The short motif at 53–66 (KRNKDKSRKKKKNK) is the Nuclear localization signal element. The span at 53–66 (KRNKDKSRKKKKNK) shows a compositional bias: basic residues. The span at 108–120 (ELQDQQHGEDHSE) shows a compositional bias: basic and acidic residues. 2 consecutive PAS domains span residues 224–359 (DSFC…ATPI) and 377–483 (FAIR…RVFQ). A disordered region spans residues 583–676 (TNTSIAGTGG…VTLTESLLNK (94 aa)). 26 repeat units span residues 589-590 (GT), 592-593 (GT), 594-595 (GT), 596-597 (GT), 598-599 (GT), 600-601 (GT), 602-603 (GT), 604-605 (GT), 606-607 (GT), 608-609 (GT), 610-611 (GT), 612-613 (GT), 614-615 (GT), 616-617 (GT), 618-619 (GT), 620-621 (GT), 622-623 (GT), 624-625 (GT), 626-627 (GT), 628-629 (GT), 630-631 (GT), 632-633 (GT), 634-635 (GT), 636-637 (GT), 638-639 (GT), and 640-641 (GT). Gly residues predominate over residues 589-643 (GTGGTGTGTGTGTGTGTGTGTGTGTGTGTGTGTGTGTGTGTGTGTGTGTGTGTGN). The 28 X 2 AA approximate tandem repeats of G-T stretch occupies residues 589-645 (GTGGTGTGTGTGTGTGTGTGTGTGTGTGTGTGTGTGTGTGTGTGTGTGTGTGTGNGT). A 27; approximate repeat occupies 642–643 (GN). Repeat unit 28 spans residues 644 to 645 (GT). The segment covering 644–654 (GTNSCTGTGTT) has biased composition (low complexity).

As to quaternary structure, forms a heterodimer with timeless (TIM); the complex then translocates into the nucleus. Phosphorylated with a circadian rhythmicity, probably by the double-time protein (dbt). Phosphorylation could be implicated in the stability of per monomer and in the formation of heterodimer per-tim.

The protein resides in the nucleus. It localises to the cytoplasm. It is found in the perinuclear region. Functionally, essential for biological clock functions. Determines the period length of circadian and ultradian rhythms; an increase in PER dosage leads to shortened circadian rhythms and a decrease leads to lengthened circadian rhythms. Essential for the circadian rhythmicity of locomotor activity, eclosion behavior, and for the rhythmic component of the male courtship song that originates in the thoracic nervous system. The biological cycle depends on the rhythmic formation and nuclear localization of the TIM-PER complex. Light induces the degradation of TIM, which promotes elimination of PER. Nuclear activity of the heterodimer coordinatively regulates PER and TIM transcription through a negative feedback loop. Behaves as a negative element in circadian transcriptional loop. Does not appear to bind DNA, suggesting indirect transcriptional inhibition. In Drosophila mauritiana (Fruit fly), this protein is Period circadian protein (per).